Consider the following 172-residue polypeptide: Myosin regulatory light chain RLC-A (172 aa).

A compositionally biased stretch (basic residues) spans 1 to 16; it reads MSSKRAKTKTTKKRPQ. A disordered region spans residues 1–20; the sequence is MSSKRAKTKTTKKRPQRATS. At threonine 19 the chain carries Phosphothreonine; by MLCK. Serine 20 carries the phosphoserine; by MLCK modification. 3 EF-hand domains span residues 29–64, 98–133, and 134–169; these read SQIQ…MGKN, DPED…MGDR, and FTDE…GAKD. Ca(2+) contacts are provided by aspartate 42, asparagine 44, aspartate 46, and aspartate 53.

In terms of assembly, myosin is a hexamer of 2 heavy chains and 4 light chains. Post-translationally, phosphorylation increases the actin-activated myosin ATPase activity and thereby regulates the contractile activity.

Myosin regulatory subunit that plays an important role in regulation of both smooth muscle and nonmuscle cell contractile activity via its phosphorylation. Implicated in cytokinesis, receptor capping, and cell locomotion. The sequence is that of Myosin regulatory light chain RLC-A (Rlc-a) from Rattus norvegicus (Rat).